A 485-amino-acid polypeptide reads, in one-letter code: DNA polymerase subunit gamma-2 (485 aa).

Residues 28-67 form a disordered region; sequence RQPEQLSKGTGSFVGPVRSQAELPRNEPREAPESGGEGSE.

As to quaternary structure, heterotrimer composed of a catalytic subunit and a homodimer of accessory subunits (POLG:POLG2).

It localises to the mitochondrion. The protein resides in the mitochondrion matrix. The protein localises to the mitochondrion nucleoid. In terms of biological role, accessory subunit of DNA polymerase gamma solely responsible for replication of mitochondrial DNA (mtDNA). Acts as an allosteric regulator of the holoenzyme activities. Enhances the polymerase activity and the processivity of POLG by increasing its interactions with the DNA template. Suppresses POLG exonucleolytic proofreading especially toward homopolymeric templates bearing mismatched termini. Binds to single-stranded DNA. This Bos taurus (Bovine) protein is DNA polymerase subunit gamma-2 (POLG2).